The chain runs to 193 residues: NADH-quinone oxidoreductase subunit B (193 aa).

[4Fe-4S] cluster-binding residues include Cys72, Cys73, Cys137, and Cys167.

It belongs to the complex I 20 kDa subunit family. As to quaternary structure, NDH-1 is composed of 14 different subunits. Subunits NuoB, C, D, E, F, and G constitute the peripheral sector of the complex. Requires [4Fe-4S] cluster as cofactor.

Its subcellular location is the cell inner membrane. It carries out the reaction a quinone + NADH + 5 H(+)(in) = a quinol + NAD(+) + 4 H(+)(out). Its function is as follows. NDH-1 shuttles electrons from NADH, via FMN and iron-sulfur (Fe-S) centers, to quinones in the respiratory chain. Couples the redox reaction to proton translocation (for every two electrons transferred, four hydrogen ions are translocated across the cytoplasmic membrane), and thus conserves the redox energy in a proton gradient. This is NADH-quinone oxidoreductase subunit B from Brucella abortus (strain S19).